The primary structure comprises 769 residues: MKFSYNWIREFVPGLTQAAAPLERLITMKTAECEGIEEEGKLLTIARVARVETVEPIPDSHNVKAVVDAGPLGRKTVVCGAPNCRPGILTAYAPIGRKVVSGVESDGMLASGAELGINKDHDGIVELNAPLGEPIPGCEPDAAIEIDNKSITHRPDLWGHHGMAREVAAILGLPLTDHAKLDLLPEGVPAIRVQIEDLALCPRYSALVFENVTVQPSPLWLQYRLTAIGLNPINNIVDMTNFVMAELAQPMHAFDADLLKGDTIFVRPAKAGEYFVALNDEEYTLDPSNLVIADASGAIALAGVIGGKGSAIGDTTTRVVLESANFQASSVRKTSSAIKLRTDASMRFEKAQDPSNTVRGLARAIELLREISPGIRLVGGVADQRREIPAPPPIELPLAWLQRKLGRAIEASEVRRILESLAFGVSEPTPGVFSVTVPSWRATKDISIKDDLVEEVGRMIGYDSIAPQAPLVPASVPPGNPSRRFQHDVRNLFVDNGFTEVYNYSFLSEASVRAFGFDSASMIRVTNPIASDQELMRSSLLPGIWRNVTENAKHHESFRLFEIGLEIHRRDTGLPNEIPHLIAAYYDRQGDGQPGLFELKRLARCLMPNAQTVPAAAREFEHTARAAEIQVAGQTVGRLFELHPKLVETGRAAILDLDLRLVQSLTAGETRYTPIRRYPSSAFDLSVLAGLREQAGTLQAAIASFAGPLQESIQFVRQYVGPPLADGVKSVSFRLTVGSPERTLSSEEITAVRNAIIEGMRAKGYELRV.

In terms of domain architecture, tRNA-binding spans 40–141 (GKLLTIARVA…GEPIPGCEPD (102 aa)). Residues 389–467 (PAPPPIELPL…RMIGYDSIAP (79 aa)) form the B5 domain. Mg(2+)-binding residues include Asp445, Asp451, Glu454, and Glu455. Residues 676–768 (RRYPSSAFDL…GMRAKGYELR (93 aa)) form the FDX-ACB domain.

This sequence belongs to the phenylalanyl-tRNA synthetase beta subunit family. Type 1 subfamily. As to quaternary structure, tetramer of two alpha and two beta subunits. Mg(2+) is required as a cofactor.

Its subcellular location is the cytoplasm. It carries out the reaction tRNA(Phe) + L-phenylalanine + ATP = L-phenylalanyl-tRNA(Phe) + AMP + diphosphate + H(+). The sequence is that of Phenylalanine--tRNA ligase beta subunit from Solibacter usitatus (strain Ellin6076).